Consider the following 693-residue polypeptide: Glycine--tRNA ligase beta subunit (693 aa).

It belongs to the class-II aminoacyl-tRNA synthetase family. In terms of assembly, tetramer of two alpha and two beta subunits.

The protein localises to the cytoplasm. It catalyses the reaction tRNA(Gly) + glycine + ATP = glycyl-tRNA(Gly) + AMP + diphosphate. In Halalkalibacterium halodurans (strain ATCC BAA-125 / DSM 18197 / FERM 7344 / JCM 9153 / C-125) (Bacillus halodurans), this protein is Glycine--tRNA ligase beta subunit (glyS).